The chain runs to 299 residues: Trans-aconitate 3-methyltransferase (299 aa).

Ser2 carries the N-acetylserine modification.

This sequence belongs to the methyltransferase superfamily. Tam family.

The protein resides in the cytoplasm. It carries out the reaction trans-aconitate + S-adenosyl-L-methionine = (E)-2-(methoxycarbonylmethyl)but-2-enedioate + S-adenosyl-L-homocysteine. In terms of biological role, catalyzes the S-adenosylmethionine monomethyl esterification of trans-aconitate and 3-isopropylmalate at high affinity and of other molecules like cis-aconitate, isocitrate, and citrate at lower velocities and affinities. The function of trans-aconitate methylation appears to be in reducing the toxicity of this spontaneous breakdown product of cis-aconitate. The role of 3-isopropylmalate methylation is unclear but may represent a metabolic branch at 3-isopropylmalate, where some of the material is taken in the pathway leading to leucine and some is taken in a pathway to the 3-isopropylmalate methyl ester, a molecule that provides a signal to switch from vegetative to invasive growth in response to amino acid starvation. In Saccharomyces cerevisiae (strain ATCC 204508 / S288c) (Baker's yeast), this protein is Trans-aconitate 3-methyltransferase (TMT1).